The sequence spans 123 residues: Large ribosomal subunit protein uL14c (123 aa).

It belongs to the universal ribosomal protein uL14 family. In terms of assembly, part of the 50S ribosomal subunit.

Its subcellular location is the plastid. It localises to the chloroplast. Functionally, binds to 23S rRNA. This Saccharum hybrid (Sugarcane) protein is Large ribosomal subunit protein uL14c.